Consider the following 350-residue polypeptide: Bifunctional methylenetetrahydrofolate dehydrogenase/cyclohydrolase, mitochondrial (350 aa).

The N-terminal 35 residues, 1 to 35 (MASVSLLSALAVRLLRPTHGCHPRLQPFHLAAVRN), are a transit peptide targeting the mitochondrion. Lys50 bears the N6-acetyllysine; alternate mark. Lys50 is covalently cross-linked (Glycyl lysine isopeptide (Lys-Gly) (interchain with G-Cter in SUMO2); alternate). Residues 84-88 (YVLNK) and 131-133 (VQL) each bind substrate. NAD(+)-binding positions include 200-202 (GRS) and Arg233. 309-313 (PGGVG) contacts substrate.

The protein belongs to the tetrahydrofolate dehydrogenase/cyclohydrolase family. As to quaternary structure, homodimer. Mg(2+) serves as cofactor.

It localises to the mitochondrion. The enzyme catalyses (6R)-5,10-methylene-5,6,7,8-tetrahydrofolate + NAD(+) = (6R)-5,10-methenyltetrahydrofolate + NADH. It carries out the reaction (6R)-5,10-methenyltetrahydrofolate + H2O = (6R)-10-formyltetrahydrofolate + H(+). In terms of biological role, although its dehydrogenase activity is NAD-specific, it can also utilize NADP at a reduced efficiency. The sequence is that of Bifunctional methylenetetrahydrofolate dehydrogenase/cyclohydrolase, mitochondrial (Mthfd2) from Mus musculus (Mouse).